The following is a 660-amino-acid chain: MASTLSPSITPQTEEPPVVPVRIQNAADISVIVIYFIVVLAVGLWSMVRSNRGTVGGFFLAGHDMAWWPMGASLFASNIGSNHFVGLAGTGAASGIAIAAVEWNALLMVLVLGWVFLPIYIKAGVLTMPEYLRKRFGGKRLQIYLSVLSLFIMVALQTSSIIFSGAIFIQLALGLNLYLAVFILLAITAFYTVAGGLASVIYTDSVQTFIMLLGSLILMGFAFAEVGGYESFTEKYMNAIPSVVEGDNLTISPKCYTPQPDSFHVFRDPVTGDIPWPGLIFGMTILAIWYWCADQVIVQRCLCGKNMSHVKAACILCGYLKLLPMFLMVMPGMISRILYTDKVACVVPSECEKQCGTAVGCTNYAYPTLVLELMPDGLRGLMLSVMLASLMSSLTSIFNSASTLFTIDLYTKIRKKASERELMIAGRIFGMVLIAVSILWVPLVQVSQNGQLFHYIGSVSSYLGPPLGAVFMLAIFFKRVNEQGAFWGLMVGLVVGLIRLIAEFVYGTGSCVAPSNCPKIICGVHYMYFAIILFFVSIIVILGVSFLTEPIPDVHLYRLCWSLWNNTEERIDLDAEELETQEEAGGALEEDSEQSRGCLKRACCLLCGLQNTGPKLTKEEEAALRQKFSDTSEKPLWRTVMNINAVLLLGVAVFVHAYFA.

Topologically, residues 1-27 (MASTLSPSITPQTEEPPVVPVRIQNAA) are cytoplasmic. The chain crosses the membrane as a helical span at residues 28–48 (DISVIVIYFIVVLAVGLWSMV). Residues 49-54 (RSNRGT) lie on the Extracellular side of the membrane. A helical transmembrane segment spans residues 55-75 (VGGFFLAGHDMAWWPMGASLF). Residues 76-82 (ASNIGSN) are Cytoplasmic-facing. The chain crosses the membrane as a helical span at residues 83 to 103 (HFVGLAGTGAASGIAIAAVEW). Residues 104–105 (NA) are Extracellular-facing. A helical transmembrane segment spans residues 106 to 126 (LLMVLVLGWVFLPIYIKAGVL). Topologically, residues 127–142 (TMPEYLRKRFGGKRLQ) are cytoplasmic. Residues 143–163 (IYLSVLSLFIMVALQTSSIIF) traverse the membrane as a helical segment. The Extracellular portion of the chain corresponds to 164–166 (SGA). The helical transmembrane segment at 167-187 (IFIQLALGLNLYLAVFILLAI) threads the bilayer. Over 188–208 (TAFYTVAGGLASVIYTDSVQT) the chain is Cytoplasmic. The helical transmembrane segment at 209–229 (FIMLLGSLILMGFAFAEVGGY) threads the bilayer. Residues 230–277 (ESFTEKYMNAIPSVVEGDNLTISPKCYTPQPDSFHVFRDPVTGDIPWP) lie on the Extracellular side of the membrane. A helical membrane pass occupies residues 278-298 (GLIFGMTILAIWYWCADQVIV). Residues 299 to 313 (QRCLCGKNMSHVKAA) are Cytoplasmic-facing. The helical transmembrane segment at 314–334 (CILCGYLKLLPMFLMVMPGMI) threads the bilayer. The Extracellular portion of the chain corresponds to 335-380 (SRILYTDKVACVVPSECEKQCGTAVGCTNYAYPTLVLELMPDGLRG). The helical transmembrane segment at 381–401 (LMLSVMLASLMSSLTSIFNSA) threads the bilayer. Over 402-423 (STLFTIDLYTKIRKKASERELM) the chain is Cytoplasmic. Residues 424–444 (IAGRIFGMVLIAVSILWVPLV) traverse the membrane as a helical segment. Residues 445 to 455 (QVSQNGQLFHY) are Extracellular-facing. A helical transmembrane segment spans residues 456-476 (IGSVSSYLGPPLGAVFMLAIF). Topologically, residues 477–484 (FKRVNEQG) are cytoplasmic. Residues 485–505 (AFWGLMVGLVVGLIRLIAEFV) form a helical membrane-spanning segment. The Extracellular segment spans residues 506 to 526 (YGTGSCVAPSNCPKIICGVHY). The helical transmembrane segment at 527-547 (MYFAIILFFVSIIVILGVSFL) threads the bilayer. At 548-639 (TEPIPDVHLY…DTSEKPLWRT (92 aa)) the chain is on the cytoplasmic side. A helical membrane pass occupies residues 640 to 660 (VMNINAVLLLGVAVFVHAYFA).

The protein belongs to the sodium:solute symporter (SSF) (TC 2.A.21) family. As to expression, expressed in small intestine. Expressed in kidney.

The protein resides in the cell membrane. The catalysed reaction is D-glucose(out) + 2 Na(+)(out) = D-glucose(in) + 2 Na(+)(in). Its activity is regulated as follows. Inhibited by phlorizin. Functionally, low-affinity sodium/D-glucose symporter. Generates D-glucose-induced depolarization in a pH-independent manner. The protein is Solute carrier family 5 member 4B of Mus musculus (Mouse).